Consider the following 152-residue polypeptide: 6,7-dimethyl-8-ribityllumazine synthase (152 aa).

Residues F21, 55-57 (AFE), and 79-81 (AVI) each bind 5-amino-6-(D-ribitylamino)uracil. 84–85 (AT) is a binding site for (2S)-2-hydroxy-3-oxobutyl phosphate. The active-site Proton donor is the H87. Residue F112 coordinates 5-amino-6-(D-ribitylamino)uracil. R126 contacts (2S)-2-hydroxy-3-oxobutyl phosphate.

The protein belongs to the DMRL synthase family. Forms an icosahedral capsid composed of 60 subunits, arranged as a dodecamer of pentamers.

The enzyme catalyses (2S)-2-hydroxy-3-oxobutyl phosphate + 5-amino-6-(D-ribitylamino)uracil = 6,7-dimethyl-8-(1-D-ribityl)lumazine + phosphate + 2 H2O + H(+). It participates in cofactor biosynthesis; riboflavin biosynthesis; riboflavin from 2-hydroxy-3-oxobutyl phosphate and 5-amino-6-(D-ribitylamino)uracil: step 1/2. In terms of biological role, catalyzes the formation of 6,7-dimethyl-8-ribityllumazine by condensation of 5-amino-6-(D-ribitylamino)uracil with 3,4-dihydroxy-2-butanone 4-phosphate. This is the penultimate step in the biosynthesis of riboflavin. The polypeptide is 6,7-dimethyl-8-ribityllumazine synthase (Exiguobacterium sibiricum (strain DSM 17290 / CCUG 55495 / CIP 109462 / JCM 13490 / 255-15)).